The primary structure comprises 599 residues: Cytochrome P450 monooxygenase ALT8 (599 aa).

Transmembrane regions (helical) follow at residues 4–21 and 36–56; these read LACV…VYLG and ILFG…PAYF. Asn-127 carries an N-linked (GlcNAc...) asparagine glycan. Over residues 495–504 the composition is skewed to low complexity; the sequence is DDSSAASPSF. A disordered region spans residues 495-522; that stretch reads DDSSAASPSFGGSGKRKSQYTDTHKEPS. Cys-539 is a heme binding site.

The protein belongs to the cytochrome P450 family. Heme serves as cofactor.

The protein resides in the membrane. It participates in secondary metabolite biosynthesis. Functionally, cytochrome P450 monooxygenase; part of the gene cluster that mediates the biosynthesis of the host-selective toxins (HSTs) AAL-toxins, sphinganine-analog mycotoxins responsible for Alternaria stem canker on tomato by the tomato pathotype. The biosynthesis starts with the polyketide synthase ALT1-catalyzed C-16 carbon chain assembly from one starter acetyl-CoA unit with malonyl-CoA extender units. ALT1 also selectively transfers methyl groups at the first and the third cycle of chain elongation for AAL toxin. The C-16 polyketide chain is released from the enzyme by a nucleophilic attack of a carbanion, which is derived from R-carbon of glycin by decarboxylation, on the carbonyl carbon of polyketide acyl chain. This step is probably catalyzed by a pyridoxal 5'-phosphate-dependent aminoacyl transferase ALT4. The respective functions of the other enzymes encoded by the cluster have still to be elucidated. The sphingosine N-acyltransferase-like protein ALT7 seems not to act as a resistance/self-tolerance factor against the toxin in the toxin biosynthetic gene cluster, contrary to what is expected. The protein is Cytochrome P450 monooxygenase ALT8 of Alternaria alternata (Alternaria rot fungus).